The following is a 251-amino-acid chain: RING-H2 finger protein ATL10 (251 aa).

A helical transmembrane segment spans residues 59–79; it reads MMLLSILICGIICCLGLHYII. The segment at 135–177 adopts an RING-type; atypical zinc-finger fold; sequence CVICLSDFVSGEQLRLLPKCNHGFHVRCIDKWLQQHLTCPKCR.

This sequence belongs to the RING-type zinc finger family. ATL subfamily.

The protein resides in the membrane. It carries out the reaction S-ubiquitinyl-[E2 ubiquitin-conjugating enzyme]-L-cysteine + [acceptor protein]-L-lysine = [E2 ubiquitin-conjugating enzyme]-L-cysteine + N(6)-ubiquitinyl-[acceptor protein]-L-lysine.. Its pathway is protein modification; protein ubiquitination. This is RING-H2 finger protein ATL10 (ATL10) from Arabidopsis thaliana (Mouse-ear cress).